The primary structure comprises 138 residues: Putative pre-16S rRNA nuclease (138 aa).

Belongs to the YqgF nuclease family.

It localises to the cytoplasm. In terms of biological role, could be a nuclease involved in processing of the 5'-end of pre-16S rRNA. The protein is Putative pre-16S rRNA nuclease of Klebsiella pneumoniae subsp. pneumoniae (strain ATCC 700721 / MGH 78578).